A 1013-amino-acid polypeptide reads, in one-letter code: Antigenic heat-stable 120 kDa protein (1013 aa).

2 disordered regions span residues 1–73 (DTSE…TSDP) and 348–396 (GQSK…PQSQ). A compositionally biased stretch (basic and acidic residues) spans 12–27 (EYTEEQKQKLEQEQKE). A compositionally biased stretch (low complexity) spans 47–61 (SASSAQSTPSISALS). Polar residues-rich tracts occupy residues 62–73 (GNISPDSQTSDP), 348–373 (GQSK…QYKQ), and 380–396 (PTNQ…PQSQ).

It is found in the cytoplasm. The polypeptide is Antigenic heat-stable 120 kDa protein (sca4) (Rickettsia rhipicephali).